Consider the following 408-residue polypeptide: Argininosuccinate synthase (408 aa).

8-16 (AYSGGLDTS) contributes to the ATP binding site. Y86 contributes to the L-citrulline binding site. G116 serves as a coordination point for ATP. 3 residues coordinate L-aspartate: T118, N122, and D123. Position 122 (N122) interacts with L-citrulline. R126, S174, E259, and Y271 together coordinate L-citrulline.

Belongs to the argininosuccinate synthase family. Type 1 subfamily. As to quaternary structure, homotetramer.

The protein resides in the cytoplasm. The catalysed reaction is L-citrulline + L-aspartate + ATP = 2-(N(omega)-L-arginino)succinate + AMP + diphosphate + H(+). It functions in the pathway amino-acid biosynthesis; L-arginine biosynthesis; L-arginine from L-ornithine and carbamoyl phosphate: step 2/3. This is Argininosuccinate synthase from Leuconostoc mesenteroides subsp. mesenteroides (strain ATCC 8293 / DSM 20343 / BCRC 11652 / CCM 1803 / JCM 6124 / NCDO 523 / NBRC 100496 / NCIMB 8023 / NCTC 12954 / NRRL B-1118 / 37Y).